The primary structure comprises 236 residues: Sugar fermentation stimulation protein homolog (236 aa).

Belongs to the SfsA family.

This chain is Sugar fermentation stimulation protein homolog, found in Methylobacterium nodulans (strain LMG 21967 / CNCM I-2342 / ORS 2060).